The following is a 231-amino-acid chain: 7-cyano-7-deazaguanine synthase (231 aa).

Position 8–18 (8–18 (FSGGQDSTTCL)) interacts with ATP. Zn(2+) contacts are provided by C188, C197, C200, and C203.

Belongs to the QueC family. Requires Zn(2+) as cofactor.

It catalyses the reaction 7-carboxy-7-deazaguanine + NH4(+) + ATP = 7-cyano-7-deazaguanine + ADP + phosphate + H2O + H(+). Its pathway is purine metabolism; 7-cyano-7-deazaguanine biosynthesis. Functionally, catalyzes the ATP-dependent conversion of 7-carboxy-7-deazaguanine (CDG) to 7-cyano-7-deazaguanine (preQ(0)). The protein is 7-cyano-7-deazaguanine synthase of Escherichia coli O157:H7.